The primary structure comprises 94 residues: Integration host factor subunit beta (94 aa).

The protein belongs to the bacterial histone-like protein family. Heterodimer of an alpha and a beta chain.

In terms of biological role, this protein is one of the two subunits of integration host factor, a specific DNA-binding protein that functions in genetic recombination as well as in transcriptional and translational control. The sequence is that of Integration host factor subunit beta from Chelativorans sp. (strain BNC1).